The chain runs to 121 residues: Fluoride-specific ion channel FluC 1 (121 aa).

4 helical membrane-spanning segments follow: residues Y3 to L23, V35 to F55, A64 to I84, and F92 to V112. Residues G71 and T74 each coordinate Na(+).

This sequence belongs to the fluoride channel Fluc/FEX (TC 1.A.43) family.

The protein localises to the cell membrane. The enzyme catalyses fluoride(in) = fluoride(out). Its activity is regulated as follows. Na(+) is not transported, but it plays an essential structural role and its presence is essential for fluoride channel function. Its function is as follows. Fluoride-specific ion channel. Important for reducing fluoride concentration in the cell, thus reducing its toxicity. This Staphylococcus aureus (strain bovine RF122 / ET3-1) protein is Fluoride-specific ion channel FluC 1.